Here is a 181-residue protein sequence, read N- to C-terminus: MYKSYKKRWYVLQAFSGFEGRIAQSIREHVKLKKMEKLFGEVMVPSEEVIEIKAGQRKKSEYKFFPGYVLIQMIMNESSWHLVRSIPRVLGFIGGTPDRPLPITDQEVNTIINKLKQVGDKPRPKTLFEPGETVRVNDGPFSDFNGIVEEVDYEKNRLKVSVSIFGRSTPVELDFSQVKKN.

In terms of domain architecture, KOW spans 130–158 (PGETVRVNDGPFSDFNGIVEEVDYEKNRL).

The protein belongs to the NusG family. Monomer. Interacts with the transcription termination factor Rho and with RNA polymerase.

Participates in transcription elongation, termination and antitermination. In the absence of Rho, increases the rate of transcription elongation by the RNA polymerase (RNAP), probably by partially suppressing pausing. In the presence of Rho, modulates most Rho-dependent termination events by interacting with the RNAP to render the complex more susceptible to the termination activity of Rho. May be required to overcome a kinetic limitation of Rho to function at certain terminators. Also involved in ribosomal RNA transcriptional antitermination. This Buchnera aphidicola subsp. Baizongia pistaciae (strain Bp) protein is Transcription termination/antitermination protein NusG.